Reading from the N-terminus, the 1507-residue chain is Chromatin-remodeling ATPase INO80 (1507 aa).

Disordered stretches follow at residues 30–82 (PEDE…DAED) and 428–452 (RKKQ…KRQQ). Over residues 38–67 (GSSSQDESRSTQGGVVANYSNGSKSRMNAS) the composition is skewed to polar residues. The DBINO domain occupies 350–475 (AWINIVRRDI…SHFMQNKTDS (126 aa)). Residues 428 to 450 (RKKQEKEAAEAFKREQEQRESKR) show a composition bias toward basic and acidic residues. Positions 598 to 769 (VNCYEQGLNG…WALLHFIMPM (172 aa)) constitute a Helicase ATP-binding domain. Residue 611–618 (DEMGLGKT) participates in ATP binding. In terms of domain architecture, Helicase C-terminal spans 1210-1360 (TLDILLKRLR…QLVMTGGHVQ (151 aa)). The interval 1415 to 1507 (LEELEDVDRQ…KGFDPSSSAN (93 aa)) is disordered. The segment covering 1491–1507 (ASVTESNKGFDPSSSAN) has biased composition (polar residues).

This sequence belongs to the SNF2/RAD54 helicase family. Component of the INO80 chromatin-remodeling complex. Associates with REF6/EIN6.

The protein localises to the nucleus. The catalysed reaction is ATP + H2O = ADP + phosphate + H(+). In terms of biological role, ATPase component of the chromatin remodeling INO80 complex which is involved in transcriptional regulation, DNA replication and DNA repair. Binds DNA. As part of the INO80 complex, remodels chromatin by shifting nucleosomes. The INO80 complex controls ethylene-induced H2A.Z eviction dynamics. Positive regulator of homologous recombination, but not an essential component of homologous recombination. Not involved in the illegitimate repair pathway. The polypeptide is Chromatin-remodeling ATPase INO80 (Arabidopsis thaliana (Mouse-ear cress)).